We begin with the raw amino-acid sequence, 121 residues long: Large ribosomal subunit protein uL18c (121 aa).

This sequence belongs to the universal ribosomal protein uL18 family. As to quaternary structure, part of the 50S ribosomal subunit; contacts the 5S rRNA.

The protein localises to the plastid. Its subcellular location is the cyanelle. Functionally, binds 5S rRNA, forms part of the central protuberance of the 50S subunit. In Cyanophora paradoxa, this protein is Large ribosomal subunit protein uL18c (rpl18).